The chain runs to 295 residues: Protease HtpX (295 aa).

Transmembrane regions (helical) follow at residues 4-24 and 42-62; these read ILLF…TLSL and QLLV…LFIS. Histidine 147 contributes to the Zn(2+) binding site. Glutamate 148 is a catalytic residue. Residue histidine 151 coordinates Zn(2+). The next 2 helical transmembrane spans lie at 158–178 and 195–215; these read VTLA…ARII and IAYF…ASAI. Glutamate 224 lines the Zn(2+) pocket.

This sequence belongs to the peptidase M48B family. Requires Zn(2+) as cofactor.

The protein resides in the cell inner membrane. This is Protease HtpX from Pseudomonas fluorescens (strain SBW25).